Reading from the N-terminus, the 158-residue chain is Transcription elongation factor GreA (158 aa).

This sequence belongs to the GreA/GreB family.

In terms of biological role, necessary for efficient RNA polymerase transcription elongation past template-encoded arresting sites. The arresting sites in DNA have the property of trapping a certain fraction of elongating RNA polymerases that pass through, resulting in locked ternary complexes. Cleavage of the nascent transcript by cleavage factors such as GreA or GreB allows the resumption of elongation from the new 3'terminus. GreA releases sequences of 2 to 3 nucleotides. The chain is Transcription elongation factor GreA from Zymomonas mobilis subsp. mobilis (strain ATCC 31821 / ZM4 / CP4).